Here is a 248-residue protein sequence, read N- to C-terminus: MSEGDLFLISFLKVGFASLGLNEQLINNIKRYGITKLTPFQMEVIKEIKENSNVIVDSIEGTGRTISLIIGTLDKIDETKQQQEQEQQERQQTDQQFSFPQILMILPTKELSQTTKVIYSSLGGGENNNNDFKVLSCIGGVKISMDIEILKKGNTQILLGTPGRISDLFSRKRFDTDNIKILVFDELDEILSRGFECQLEDIIKPLNNNNNLQIIVSTSGINELTSNFINTFIKIPKIIKSQQEPYKF.

The Q motif motif lies at 14-42; that stretch reads VGFASLGLNEQLINNIKRYGITKLTPFQM. The Helicase ATP-binding domain maps to 45–239; it reads IKEIKENSNV…NTFIKIPKII (195 aa). 58-65 provides a ligand contact to ATP; sequence SIEGTGRT. A DEAD box motif is present at residues 185-188; sequence DELD.

It belongs to the DEAD box helicase family. eIF4A subfamily.

The polypeptide is Putative eukaryotic initiation factor 4A-like protein (Dictyostelium discoideum (Social amoeba)).